We begin with the raw amino-acid sequence, 741 residues long: Eukaryotic peptide chain release factor GTP-binding subunit (741 aa).

Residues 5–135 (QQQQQQFNAN…SYNNNNNYNN (131 aa)) form a several sort of repeats region. Residues 59–161 (QQFGQYGQQQ…DQQQETGSGQ (103 aa)) are compositionally biased toward low complexity. Disordered regions lie at residues 59–186 (QQFG…KKVL) and 199–264 (IVTK…KTEA). Positions 162–311 (MSLEDYQKQQ…EQIDASIVND (150 aa)) are charged. 2 stretches are compositionally biased toward basic and acidic residues: residues 166–175 (DYQKQQKESL) and 202–241 (KKKEEEPVNQESKTEEPAKEEIKNQEPAEAENKVEEESKV). A tr-type G domain is found at 316–541 (KDHMSIIFMG…YLDSMPLAVR (226 aa)). Residues 325–332 (GHVDAGKS) are G1. 325 to 332 (GHVDAGKS) contacts GTP. Residues 381–385 (GKTIE) form a G2 region. Thr-399 carries the post-translational modification Phosphothreonine. Residues 402 to 405 (DAPG) are G3. GTP is bound by residues 402 to 406 (DAPGH) and 464 to 467 (NKMD). Residues 464–467 (NKMD) form a G4 region. The segment at 505-507 (SGY) is G5.

The protein belongs to the TRAFAC class translation factor GTPase superfamily. Classic translation factor GTPase family. ERF3 subfamily.

Its subcellular location is the cytoplasm. Its function is as follows. Involved in translation termination. Stimulates the activity of ERF1. Binds guanine nucleotides. This Ogataea pini (Yeast) protein is Eukaryotic peptide chain release factor GTP-binding subunit (SUP2).